The sequence spans 611 residues: Immunoglobulin superfamily member 8 (611 aa).

An N-terminal signal peptide occupies residues 1–25; that stretch reads MGVPSPTPLSSLLLLLLILGTRCYA. 4 consecutive Ig-like C2-type domains span residues 26 to 143, 160 to 284, 301 to 422, and 429 to 554; these read RQVH…AKVE, PRGR…WVQV, SQLA…EAAS, and PVHV…ADYS. The Extracellular segment spans residues 26–577; sequence RQVHVPRGPL…VYPYTHAVDT (552 aa). Cys-47 and Cys-125 are oxidised to a cystine. Residues Asn-48 and Asn-137 are each glycosylated (N-linked (GlcNAc...) asparagine). A disulfide bond links Cys-184 and Cys-268. The EWI motif signature appears at 272–274; that stretch reads EWI. Cystine bridges form between Cys-324–Cys-404 and Cys-460–Cys-542. Asn-325 carries an N-linked (GlcNAc...) asparagine glycan. Position 516 is a phosphoserine (Ser-516). Residues 578–598 traverse the membrane as a helical segment; that stretch reads LFVPLLVGTGVALVTGASVLA. Over 599 to 611 the chain is Cytoplasmic; the sequence is TITCCFMKRMRKR. 2 S-palmitoyl cysteine lipidation sites follow: Cys-602 and Cys-603.

Interacts directly with CD82 and CD9/tetraspanin-29. Also interacts with integrin alpha-3/beta-1 and integrin alpha-4/beta-1. Part of a complex composed of CD9, PTGFRN and CD81. Interacts with CD81/tetraspanin-28. In terms of tissue distribution, expressed in lymphocytes as well as in many tissues with higher expression in brain. Detected in all regions of the brain with weak expression in the pituitary. Expressed selectively by neurons but not by glial cells. Expressed in myoblasts (at protein level).

The protein localises to the cell membrane. Member of the immunoglobulin superfamily (IgSF) that links tetraspanin-enriched microdomains to the actin cytoskeleton and plays several important roles in innate and adaptive immunity. Acts as an inducible receptor of HSPA8 on dendritic cells to enhance the CCL21/SLC-dependent migration of activated mature dendritic cells while attenuating their antigen-specific stimulatory capacities. In complex with alpha-actinins ACTN1 and ACTN4, regulates actin dynamics in the immune synapse and subsequent T-cell activation. Inhibits the entry of several viruses such as hepatitis C Virus (HCV) or HIV-1. Mechanistically, promotes a change in CD81 organization at the plasma membrane by significantly restricting its diffusion which in turn influences CD81 interaction with Claudin-1/CLDN1, preventing CLDN1 from acting as a co-receptor required for HCV entry. Accumulates at the presynaptic terminal, the producer cell side of the virological synapse, to prevent HIV-1 Env-mediated cell-cell fusion. Highly expressed on malignant cells with antigen presentation defects, interacts with NK receptor KLRA9 to suppress NK-cell cytotoxicity. May participate in the regulation of neurite outgrowth and maintenance of the neural network in the adult brain. This is Immunoglobulin superfamily member 8 (Igsf8) from Mus musculus (Mouse).